The following is a 348-amino-acid chain: D-amino-acid oxidase (348 aa).

FAD-binding residues include alanine 15, isoleucine 18, lysine 40, serine 52, glycine 56, and asparagine 58. Residues tyrosine 232 and arginine 295 each coordinate (R)-lactate. Anthranilate is bound by residues tyrosine 232 and arginine 295. FAD contacts are provided by arginine 295, serine 323, glycine 326, tyrosine 327, and glutamine 328.

It belongs to the DAMOX/DASOX family. Requires FAD as cofactor.

It is found in the peroxisome. It catalyses the reaction a D-alpha-amino acid + O2 + H2O = a 2-oxocarboxylate + H2O2 + NH4(+). The catalysed reaction is D-serine + O2 + H2O = 3-hydroxypyruvate + H2O2 + NH4(+). The enzyme catalyses D-alanine + O2 + H2O = pyruvate + H2O2 + NH4(+). It carries out the reaction D-arginine + O2 + H2O = 5-guanidino-2-oxopentanoate + H2O2 + NH4(+). Its function is as follows. Catalyzes the oxidative deamination of D-amino acids with broad substrate specificity. Enables the organism to utilize D-amino acids as a source of nutrients. The sequence is that of D-amino-acid oxidase from Schizosaccharomyces pombe (strain 972 / ATCC 24843) (Fission yeast).